Here is a 920-residue protein sequence, read N- to C-terminus: Sensor histidine kinase SsrA (920 aa).

Over 1-19 (MNLLNLKNTLQTSLVIRLT) the chain is Cytoplasmic. Residues 20–40 (FLFLLTTIIIWLLSVLTAAYI) traverse the membrane as a helical segment. Residues 41 to 291 (SMVQKRQHII…YGNLHNRILK (251 aa)) are Periplasmic-facing. Residues 292-312 (IILQQIPFTLTALVLMTSAFC) form a helical membrane-spanning segment. Topologically, residues 313 to 920 (WLLHRSLAKP…RMIFKNYTIT (608 aa)) are cytoplasmic. The HAMP domain occupies 317-369 (RSLAKPLWRFVDVINKTATAPLSTRLPAQRLDELDSIAGAFNQLLDTLQVQYD). A coiled-coil region spans residues 354 to 395 (AGAFNQLLDTLQVQYDNLENKVAERTQALNEAKKRAERANKR). A Histidine kinase domain is found at 402–614 (VISHELRTPM…CVSLVLPLQE (213 aa)). The ATP site is built by His-405 and Asp-549. His-405 is subject to Phosphohistidine; by autocatalysis. In terms of domain architecture, Response regulatory spans 690 to 808 (QILLVDDADI…TLARYISIAA (119 aa)). Residue Asp-739 is modified to 4-aspartylphosphate.

Autophosphorylated.

Its subcellular location is the cell inner membrane. It carries out the reaction ATP + protein L-histidine = ADP + protein N-phospho-L-histidine.. Its function is as follows. Member of the two-component regulatory system SsrA/SsrB (SpiR/SsrB) that is required for intracellular proliferation and systemic dissemination within the host. When inside acidic Salmonella-containing vesicles (SCV) within host cells the SsrA sensor kinase autophosphorylates and the phosphoryl group is transferred to the response regulator SsrB; phosphorylated SsrB activates the expression of genes encoding virulence proteins, including pathogenicity island 2 (SPI2) and other horizontally acquired genes, and antagonizes the action of transcriptional repressor hns (H-NS). This chain is Sensor histidine kinase SsrA, found in Salmonella typhimurium (strain LT2 / SGSC1412 / ATCC 700720).